A 546-amino-acid chain; its full sequence is ATP synthase subunit alpha (546 aa).

ATP is bound at residue 172-179 (GDRKTGKT). 2 stretches are compositionally biased toward polar residues: residues 511–520 (FRTTEGNNLG) and 536–546 (TELNVSRKTAK). Positions 511-546 (FRTTEGNNLGTEAPVDPLAADDVNKTELNVSRKTAK) are disordered.

Belongs to the ATPase alpha/beta chains family. As to quaternary structure, F-type ATPases have 2 components, CF(1) - the catalytic core - and CF(0) - the membrane proton channel. CF(1) has five subunits: alpha(3), beta(3), gamma(1), delta(1), epsilon(1). CF(0) has three main subunits: a(1), b(2) and c(9-12). The alpha and beta chains form an alternating ring which encloses part of the gamma chain. CF(1) is attached to CF(0) by a central stalk formed by the gamma and epsilon chains, while a peripheral stalk is formed by the delta and b chains.

It is found in the cell membrane. The catalysed reaction is ATP + H2O + 4 H(+)(in) = ADP + phosphate + 5 H(+)(out). Its function is as follows. Produces ATP from ADP in the presence of a proton gradient across the membrane. The alpha chain is a regulatory subunit. The protein is ATP synthase subunit alpha of Corynebacterium aurimucosum (strain ATCC 700975 / DSM 44827 / CIP 107346 / CN-1) (Corynebacterium nigricans).